Consider the following 589-residue polypeptide: Leucine-rich repeat and immunoglobulin-like domain-containing nogo receptor-interacting protein 3 (589 aa).

Positions 1–23 (MTCWLHMLGLHLLLLPTAPLAAG) are cleaved as a signal peptide. The 30-residue stretch at 24 to 53 (CPARCECSASTRTVACGRRRLTAIPEGIPA) folds into the LRRNT domain. The Extracellular segment spans residues 24–528 (CPARCECSAS…LDLTTILVST (505 aa)). 11 LRR repeats span residues 54-75 (ETRM…DLAS), 78-99 (TLEE…AFAN), 102-123 (RLRV…VFTH), 126-147 (SLTL…SFQD), 150-171 (SLQR…AFAG), 174-195 (GLAE…SLGH), 206-227 (HLAI…SHLE), 246-267 (NLTS…ALRQ), 270-291 (HLTC…SFRD), 294-315 (RLRE…AFVG), and 318-339 (QIRL…TFHS). Asparagine 184 is a glycosylation site (N-linked (GlcNAc...) asparagine). N-linked (GlcNAc...) asparagine glycans are attached at residues asparagine 246, asparagine 256, and asparagine 275. Asparagine 323 is a glycosylation site (N-linked (GlcNAc...) asparagine). The 55-residue stretch at 351-405 (NPLACDCRLLWIVQRRKTLNFDGRLPACATPAEVRGDALHNLPDSVLFEYFVCRK) folds into the LRRCT domain. Positions 406–495 (PKIRERRLQH…GNDTYFATLT (90 aa)) constitute an Ig-like C2-type domain. Residues cysteine 428 and cysteine 479 are joined by a disulfide bond. N-linked (GlcNAc...) asparagine glycans are attached at residues asparagine 487, asparagine 501, and asparagine 509. A helical transmembrane segment spans residues 529–549 (AMGCITFLGVVLFCFLLLFVW). At 550–589 (SRGRGQHKNNFSVEYSFRKVDGPAAAAGQGGARKFNMKMI) the chain is on the cytoplasmic side.

It is found in the membrane. This is Leucine-rich repeat and immunoglobulin-like domain-containing nogo receptor-interacting protein 3 (Lingo3) from Mus musculus (Mouse).